The following is a 1511-amino-acid chain: ATP-dependent permease PDR12 (1511 aa).

Basic and acidic residues predominate over residues 1 to 21 (MSSTDEHIEKDISSRSNHDDD). Positions 1–37 (MSSTDEHIEKDISSRSNHDDDYANSVQSYAASEGQVD) are disordered. Ser-2 is modified (N-acetylserine). The Cytoplasmic portion of the chain corresponds to 2–508 (SSTDEHIEKD…RGFQRVKGDS (507 aa)). Phosphoserine is present on residues Ser-32, Ser-52, and Ser-56. An ABC transporter 1 domain is found at 144–397 (IPAHLISKFT…FQRMGWVKPN (254 aa)). A Glycyl lysine isopeptide (Lys-Gly) (interchain with G-Cter in ubiquitin) cross-link involves residue Lys-426. A helical transmembrane segment spans residues 509–529 (TYTKVYLSSFLIKALIIGSMF). Over 530–548 (HKIDDKSQSTTAGAYSRGG) the chain is Extracellular. Residues 549-569 (MLFYVLLFASVTSLAEIGNSF) form a helical membrane-spanning segment. The Cytoplasmic portion of the chain corresponds to 570 to 597 (SSRPVIVKHKSYSMYHLSAESLQEIITE). The chain crosses the membrane as a helical span at residues 598–618 (FPTKFVAIVILCLITYWIPFM). The Extracellular portion of the chain corresponds to 619 to 622 (KYEA). A helical membrane pass occupies residues 623-643 (GAFFQYILYLLTVQQCTSFIF). At 644-657 (KFVATMSKSGVDAH) the chain is on the cytoplasmic side. A helical transmembrane segment spans residues 658-678 (AVGGLWVLMLCVYAGFVLPIG). Residues 679 to 765 (EMHHWIRWLH…FAYKHAWRNW (87 aa)) are Extracellular-facing. The helical transmembrane segment at 766 to 786 (GVNIVWTFGYIVFNVILSEYL) threads the bilayer. The Cytoplasmic portion of the chain corresponds to 787-1182 (KPVEGGGDLL…WRSPVYIRAK (396 aa)). In terms of domain architecture, ABC transporter 2 spans 836–1084 (IAEKDVFTWN…TLLKYFERQS (249 aa)). Residues 878-885 (GESGAGKT) and 972-979 (AEALVGKT) each bind ATP. Residues 1183–1203 (FFECVACALFVGLSYVGVNHS) traverse the membrane as a helical segment. Val-1204 is a topological domain (extracellular). The helical transmembrane segment at 1205-1225 (GGAIEAFSSIFMLLLIALAMI) threads the bilayer. Residues 1226 to 1254 (NQLHVFAYDSRELYEVREAASNTFHWSVL) lie on the Cytoplasmic side of the membrane. The helical transmembrane segment at 1255–1275 (LLCHAAVENFWSTLCQFMCFI) threads the bilayer. Over 1276–1291 (CYYWPAQFSGRASHAG) the chain is Extracellular. The chain crosses the membrane as a helical span at residues 1292–1312 (FFFFFYVLIFPLYFVTYGLWI). At 1313–1318 (LYMSPD) the chain is on the cytoplasmic side. A helical membrane pass occupies residues 1319–1339 (VPSASMINSNLFAAMLLFCGI). At 1340–1444 (LQPREKMPAF…NVKWDHRWRN (105 aa)) the chain is on the extracellular side. N-linked (GlcNAc...) asparagine glycosylation occurs at Asn-1405. The helical transmembrane segment at 1445–1465 (FGFMWAYICFNIAAMLICYYV) threads the bilayer. Residues 1466–1511 (VRVKVWSLKSVLNFKKWFNGPRKERHEKDTNIFQTVPGDENKITKK) are Cytoplasmic-facing.

It belongs to the ABC transporter superfamily. ABCG family. PDR (TC 3.A.1.205) subfamily.

Its subcellular location is the cell membrane. In terms of biological role, plasma membrane transporter which mediates resistance to water-soluble, monocarboxylic acids with chain lengths of from C1 to C7 by active extrusion of the preservative anions from the cytosol. Also involved in the export of aromatic and branched-chain organic acids produced in amino acid catabolism. This Saccharomyces cerevisiae (strain ATCC 204508 / S288c) (Baker's yeast) protein is ATP-dependent permease PDR12 (PDR12).